The following is a 104-amino-acid chain: Replication restart protein PriB (104 aa).

The SSB domain maps to 1-101; the sequence is MTNRLALSGT…LHAEQIELID (101 aa).

It belongs to the PriB family. Homodimer. Interacts with PriA and DnaT. Component of the replication restart primosome. Primosome assembly occurs via a 'hand-off' mechanism. PriA binds to replication forks, subsequently PriB then DnaT bind; DnaT then displaces ssDNA to generate the helicase loading substrate.

In terms of biological role, involved in the restart of stalled replication forks, which reloads the replicative helicase on sites other than the origin of replication; the PriA-PriB pathway is the major replication restart pathway. During primosome assembly it facilitates complex formation between PriA and DnaT on DNA; stabilizes PriA on DNA. Stimulates the DNA unwinding activity of PriA helicase. The chain is Replication restart protein PriB from Salmonella agona (strain SL483).